The sequence spans 280 residues: Chaperone protein LppX (280 aa).

The N-terminal stretch at 1–18 is a signal peptide; that stretch reads MRKWLIFLLIAAVAGLSA. Cysteine 19 is lipidated: N-palmitoyl cysteine. Cysteine 19 is lipidated: S-diacylglycerol cysteine.

It localises to the cell membrane. In terms of biological role, is required for the expression of the adjacently encoded xylanase Xyn11E in an active form. LppX seems to act as a specific chaperone necessary for the correct folding of the xylanase during secretion across the cytoplasmic membrane. The protein is Chaperone protein LppX of Paenibacillus barcinonensis.